We begin with the raw amino-acid sequence, 240 residues long: Protein OXIDATIVE STRESS 3 LIKE 4 (240 aa).

Residues 1–128 (MELMAKPTFS…SKSFGNLGEI (128 aa)) form a disordered region. Polar residues predominate over residues 51 to 66 (WSGQTADYSSDSSSIG). Residues 70 to 84 (DSEEDEEESENENDD) are compositionally biased toward acidic residues. The Nuclear localization signal motif lies at 142–150 (NKRRRLQIC). The segment at 163–207 (NPKSMPLLPVNEDEDDDDEDDDEEDLKSGFDENKSSSDEEGVKKV) is disordered. Over residues 173–187 (NEDEDDDDEDDDEED) the composition is skewed to acidic residues. A compositionally biased stretch (basic and acidic residues) spans 188 to 205 (LKSGFDENKSSSDEEGVK). A kinase-inducible domain (KID) region spans residues 202-229 (EGVKKVVVRKGSFKNRAYKSRSCFALSD). Residue Ser213 is modified to Phosphoserine.

Interacts with HDA19; Ser-213 is critical for this interaction.

Its subcellular location is the nucleus. Functionally, transcription activator which may regulates gene expression through interaction with the histone deacetylase HDA19. Promotes slightly the tolerance to cadmium (Cd) and to oxidizing chemicals (e.g. diamide and tert-butyl hydroperoxide (t-BOOH)). In Arabidopsis thaliana (Mouse-ear cress), this protein is Protein OXIDATIVE STRESS 3 LIKE 4.